The following is a 145-amino-acid chain: Arginine repressor (145 aa).

Belongs to the ArgR family.

Its subcellular location is the cytoplasm. The protein operates within amino-acid biosynthesis; L-arginine biosynthesis [regulation]. Its function is as follows. Regulates arginine biosynthesis genes. This chain is Arginine repressor, found in Solibacter usitatus (strain Ellin6076).